We begin with the raw amino-acid sequence, 70 residues long: MPIVRLKENEPFEAALRRFKRTIEKTGLLTELRSREFYEKPTAERKRKHAAAVKRHYKRIRSQQLPPRLY.

Residues 40–70 (KPTAERKRKHAAAVKRHYKRIRSQQLPPRLY) are disordered. Residues 45-61 (RKRKHAAAVKRHYKRIR) are compositionally biased toward basic residues.

The protein belongs to the bacterial ribosomal protein bS21 family.

The polypeptide is Small ribosomal subunit protein bS21 (Bordetella parapertussis (strain 12822 / ATCC BAA-587 / NCTC 13253)).